A 553-amino-acid chain; its full sequence is Solute carrier family 22 member 12 (553 aa).

Residues 10 to 30 (VGGLGRFQLFQTVALVTPILW) form a helical membrane-spanning segment. The N-linked (GlcNAc...) asparagine glycan is linked to asparagine 56. 11 consecutive transmembrane segments (helical) span residues 146 to 166 (PMAQ…CGHA), 182 to 202 (LVSV…YCLF), 204 to 224 (FLLA…LMEW), 232 to 252 (LVMT…GSVA), 260 to 280 (MLQL…WWLP), 351 to 371 (IISM…ALDL), 378 to 398 (IFLL…GSLL), 412 to 432 (FLVL…GMGV), 435 to 455 (SALA…ITIF), 466 to 486 (MTAV…GPLV), and 495 to 515 (WMPL…ALLL). The residue at position 534 (serine 534) is a Phosphoserine. Position 542 is a phosphothreonine (threonine 542).

This sequence belongs to the major facilitator (TC 2.A.1) superfamily. Organic cation transporter (TC 2.A.1.19) family. Interacts with PDZK1. Post-translationally, N-glycosylated. In terms of tissue distribution, detected in kidney (at protein level). Detected in kidney cortex, in proximal tubules.

It localises to the apical cell membrane. The catalysed reaction is urate(out) + (S)-lactate(in) = urate(in) + (S)-lactate(out). It carries out the reaction nicotinate(in) + urate(out) = nicotinate(out) + urate(in). The enzyme catalyses urate(out) + n chloride(in) = urate(in) + n chloride(out). It catalyses the reaction orotate(out) + nicotinate(in) = orotate(in) + nicotinate(out). In terms of biological role, electroneutral antiporter that translocates urate across the apical membrane of proximal tubular cells in exchange for monovalent organic or inorganic anions. Involved in renal reabsorption of urate and helps maintaining blood levels of uric acid. Mediates urate uptake by an exchange with organic anions such as (S)-lactate and nicotinate, and inorganic anion Cl(-). Other inorganic anions such as Br(-), I(-) and NO3(-) may also act as counteranions that exchange for urate. Also mediates orotate tubular uptake coupled with nicotinate efflux and to a lesser extent with lactate efflux, therefore displaying a potential role in orotate renal reabsorption. Orotate transport is Cl(-)-dependent. This chain is Solute carrier family 22 member 12, found in Mus musculus (Mouse).